We begin with the raw amino-acid sequence, 161 residues long: Monooxygenase AgnL5 (161 aa).

This sequence belongs to the avfA family.

The protein operates within secondary metabolite biosynthesis. Functionally, monooxygenase; part of the gene cluster that mediates the biosynthesis of agnestins, dihydroxy-xanthone metabolites. The pathway begins with the assembly and cyclization of atrochrysone thioester by the non-reducing polyketide synthase Agnpks1. The atrochrysone carboxyl ACP thioesterase AgnL7 then breaks the thioester bond and releases the atrochrysone carboxylic acid as the first enzyme-free intermediate. The decarboxylase AgnL1 then catalyzes the concerted decarboxylation-elimination required to convert atochrysone carboxylic acid into emodin anthrone, which is further oxidized to emodin by the anthrone oxygenase AgnL2. Emodin then undergoes reduction catalyzed by the oxidoreductase AgnL4 to yield the dihydroquinone tautomer which is the substrate for reduction by the short chain dehydrogenase AgnL6 reduction to produce hydroxyketone, followed by AgnL8 dehydration and likely spontaneous autoxidation to chrysophanol. Baeyer-Villiger oxidation by the oxidase AgnL3 leads to monodictyphenone via cleavage of the C-10/C-10a bond of chrysophanol. Alternative cleavage at the C-4a/C-10 bond of chrysophanol also leads to the formation some cephalone F. Further conversion to agnestins A and B, requires reduction to dihydro-monodictyphenone, oxidation to agnestin C probably via an epoxide, and rearrangement to either agnestin A or agnestin B directly, although agnestin A or agnestin B can also interconvert. Within the cluster, AgnR1 is the only unassigned oxidoreductase present which could be involved in this conversion. However, AgnR1 seems not to be involved in this step, and thus genes involved in the proposed oxidation/reduction may be located elsewhere on the genome. Further agnestin A derivatives are probably formed by spontaneous decarboxylations, dehydrations and methanolysis reactions. This Paecilomyces divaricatus (Penicillium divaricatum) protein is Monooxygenase AgnL5.